Reading from the N-terminus, the 698-residue chain is Elongation factor G 1 (698 aa).

In terms of domain architecture, tr-type G spans Glu-8–Thr-290. Residues Ala-17–Thr-24, Asp-88–His-92, and Asn-142–Asp-145 contribute to the GTP site.

Belongs to the TRAFAC class translation factor GTPase superfamily. Classic translation factor GTPase family. EF-G/EF-2 subfamily.

Its subcellular location is the cytoplasm. Its function is as follows. Catalyzes the GTP-dependent ribosomal translocation step during translation elongation. During this step, the ribosome changes from the pre-translocational (PRE) to the post-translocational (POST) state as the newly formed A-site-bound peptidyl-tRNA and P-site-bound deacylated tRNA move to the P and E sites, respectively. Catalyzes the coordinated movement of the two tRNA molecules, the mRNA and conformational changes in the ribosome. In Vibrio cholerae serotype O1 (strain ATCC 39315 / El Tor Inaba N16961), this protein is Elongation factor G 1.